Here is a 499-residue protein sequence, read N- to C-terminus: MEFSTQTTASLHQIKTAALAVGVFADGVLSAAAEVIDRASHGAVAAVVKSEFRGRTGGTLVLRSLAGVSAQRVVLVGLGKQAEYNARAHASAEQAFAAACVAAQVGEGVSTLAGVAIEGVPVRARARSAAIAAGAAAYHYDATFGKANRDARPRLKKIVQVVDRAASAQTQLGLREGAAIAHGMELTRTLGNLPGNVCTPAYLGNTAKKLAREFKSLKVEVLERKQVEALGMGSFLSVARGSEEPLRFIVLRHAGKPAKKDKAGPVVLVGKGITFDAGGISLKPAATMDEMKYDMCGAASVLGTFRALAELELPLDVVGLIAACENLPSGKANKPGDVVTSMSGQTIEILNTDAEGRLVLCDALTYAERFKPAAVIDIATLTGACVVALGNVNSGLFSKDDALADALLAASRQSLDPAWRLPLDDAYQDQLKSNFADIANIGGPPAGAVTAACFLSRFTKAYPWAHLDIAGTAWRGGKDKGATGRPVPLLMQYLLDQAG.

Mn(2+)-binding residues include Lys271 and Asp276. Lys283 is a catalytic residue. Residues Asp294, Asp353, and Glu355 each contribute to the Mn(2+) site. Residue Arg357 is part of the active site.

Belongs to the peptidase M17 family. Requires Mn(2+) as cofactor.

It localises to the cytoplasm. The enzyme catalyses Release of an N-terminal amino acid, Xaa-|-Yaa-, in which Xaa is preferably Leu, but may be other amino acids including Pro although not Arg or Lys, and Yaa may be Pro. Amino acid amides and methyl esters are also readily hydrolyzed, but rates on arylamides are exceedingly low.. It catalyses the reaction Release of an N-terminal amino acid, preferentially leucine, but not glutamic or aspartic acids.. Presumably involved in the processing and regular turnover of intracellular proteins. Catalyzes the removal of unsubstituted N-terminal amino acids from various peptides. This chain is Probable cytosol aminopeptidase, found in Bordetella parapertussis (strain 12822 / ATCC BAA-587 / NCTC 13253).